The following is a 278-amino-acid chain: Orotidine 5'-phosphate decarboxylase (278 aa).

Lys95 functions as the Proton donor in the catalytic mechanism.

The protein belongs to the OMP decarboxylase family. Type 2 subfamily.

It catalyses the reaction orotidine 5'-phosphate + H(+) = UMP + CO2. Its pathway is pyrimidine metabolism; UMP biosynthesis via de novo pathway; UMP from orotate: step 2/2. This is Orotidine 5'-phosphate decarboxylase from Corynebacterium glutamicum (strain ATCC 13032 / DSM 20300 / JCM 1318 / BCRC 11384 / CCUG 27702 / LMG 3730 / NBRC 12168 / NCIMB 10025 / NRRL B-2784 / 534).